The primary structure comprises 112 residues: Nucleoid-associated protein Pfl01_1806 (112 aa).

This sequence belongs to the YbaB/EbfC family. In terms of assembly, homodimer.

It is found in the cytoplasm. Its subcellular location is the nucleoid. Functionally, binds to DNA and alters its conformation. May be involved in regulation of gene expression, nucleoid organization and DNA protection. The chain is Nucleoid-associated protein Pfl01_1806 from Pseudomonas fluorescens (strain Pf0-1).